The sequence spans 278 residues: HTH-type transcriptional regulator HdfR (278 aa).

The 58-residue stretch at 1 to 58 folds into the HTH lysR-type domain; sequence MDTELLKTFLEVSRTRHFGRAAEALYLTQSAVSFRIRQLENQLGVNLFTRHRNNIRLT. Positions 18-37 form a DNA-binding region, H-T-H motif; the sequence is FGRAAEALYLTQSAVSFRIR.

The protein belongs to the LysR transcriptional regulatory family.

In terms of biological role, negatively regulates the transcription of the flagellar master operon flhDC by binding to the upstream region of the operon. The protein is HTH-type transcriptional regulator HdfR of Salmonella newport (strain SL254).